A 461-amino-acid chain; its full sequence is Ribosomal protein uS12 methylthiotransferase RimO (461 aa).

The MTTase N-terminal domain maps to 13 to 128; it reads PKVGFVSLGC…VMQHVHTHLP (116 aa). The [4Fe-4S] cluster site is built by Cys-22, Cys-58, Cys-87, Cys-159, Cys-163, and Cys-166. In terms of domain architecture, Radical SAM core spans 145 to 390; that stretch reads LTPRHYAYLK…MEVAEEVSAK (246 aa). Residues 393 to 461 form the TRAM domain; that stretch reads AKKVGKTLKV…ADGHDLWGEV (69 aa).

This sequence belongs to the methylthiotransferase family. RimO subfamily. It depends on [4Fe-4S] cluster as a cofactor.

It is found in the cytoplasm. It carries out the reaction L-aspartate(89)-[ribosomal protein uS12]-hydrogen + (sulfur carrier)-SH + AH2 + 2 S-adenosyl-L-methionine = 3-methylsulfanyl-L-aspartate(89)-[ribosomal protein uS12]-hydrogen + (sulfur carrier)-H + 5'-deoxyadenosine + L-methionine + A + S-adenosyl-L-homocysteine + 2 H(+). In terms of biological role, catalyzes the methylthiolation of an aspartic acid residue of ribosomal protein uS12. This is Ribosomal protein uS12 methylthiotransferase RimO from Paraburkholderia phytofirmans (strain DSM 17436 / LMG 22146 / PsJN) (Burkholderia phytofirmans).